The primary structure comprises 984 residues: Mineralocorticoid receptor (984 aa).

Residues 1–602 (METKGYHSLP…STGSSRPSKI (602 aa)) are modulating. A compositionally biased stretch (polar residues) spans 231-243 (QGTPLTCSPNVEN). Disordered stretches follow at residues 231–329 (QGTP…AAST) and 346–369 (SGTS…EKGA). A phosphoserine mark is found at Ser250, Ser259, Ser283, Ser287, and Ser299. Residues 259 to 291 (SPLSSPLSSMKSSISSPPSHCSVKSPVSSPNNV) show a composition bias toward low complexity. Residues 292 to 329 (TLRSSVSSPANINNSRCSVSSPSNTNNRSTLSSPAAST) are compositionally biased toward polar residues. A compositionally biased stretch (low complexity) spans 346-355 (SGTSAGSSTS). 8 residues coordinate Zn(2+): Cys603, Cys606, Cys620, Cys623, Cys639, Cys645, Cys655, and Cys658. 2 consecutive NR C4-type zinc fingers follow at residues 603–623 (CLVC…CGSC) and 639–663 (CAGR…LQKC). A DNA-binding region (nuclear receptor) is located at residues 603–668 (CLVCGDEASG…RLQKCLQAGM (66 aa)). Residues 669–725 (NLGARKSKKLGKLKGIHEEQPQQQQPPPPPPPPQSPEEGTTYIAPAKEPSVNTALVP) form a hinge region. The interval 684–710 (IHEEQPQQQQPPPPPPPPQSPEEGTTY) is disordered. Residues 692–703 (QQPPPPPPPPQS) show a composition bias toward pro residues. In terms of domain architecture, NR LBD spans 726–964 (QLSTISRALT…EFPAMLVEII (239 aa)). Asn770 and Gln776 together coordinate 21-hydroxyprogesterone. Residues Asn770 and Gln776 each contribute to the aldosterone site. The progesterone site is built by Asn770 and Gln776. The interval 782–785 (KWAK) is important for coactivator binding. Positions 817 and 945 each coordinate 21-hydroxyprogesterone. Aldosterone is bound by residues Arg817 and Thr945. Residues Arg817 and Thr945 each coordinate progesterone.

This sequence belongs to the nuclear hormone receptor family. NR3 subfamily. As to quaternary structure, heteromultimeric cytoplasmic complex with HSP90, HSP70, and FKBP4, in the absence of ligand. After ligand binding, it translocates to the nucleus and binds to DNA as a homodimer and as a heterodimer with NR3C1. Binds the coactivator NCOA2. May interact with HSD11B2 in the absence of ligand. Binds the coactivators NCOA1, TIF1 and NRIP1. In terms of processing, phosphorylated.

The protein localises to the cytoplasm. Its subcellular location is the nucleus. The protein resides in the endoplasmic reticulum membrane. Functionally, receptor for both mineralocorticoids (MC) such as aldosterone and glucocorticoids (GC) such as corticosterone or cortisol. Binds to mineralocorticoid response elements (MRE) and transactivates target genes. The effect of MC is to increase ion and water transport and thus raise extracellular fluid volume and blood pressure and lower potassium levels. The polypeptide is Mineralocorticoid receptor (NR3C2) (Aotus nancymaae (Ma's night monkey)).